Consider the following 599-residue polypeptide: RING finger protein unkempt (599 aa).

C3H1-type zinc fingers lie at residues 71-100 (YSADNYCTKYDETTGICPEGDECPYLHRTA), 111-141 (YYKTCMCVHDTDSRGYCVKNGLHCAFAHGMQ), 194-220 (NYKTEPCKRPPRLCRQGYACPQYHNSK), 230-264 (KYRSTPCPNVKHGEEWGEPGNCEAGDNCQYCHTRT), and 272-300 (IYKSTKCNDVQQAGYCPRSVFCAFAHVEP). Serine 411 bears the Phosphoserine mark. The RING-type zinc finger occupies 556-591 (CMKCEENNRTVTLEPCNHLSICNTCAESVTECPYCQ).

It belongs to the unkempt family. In terms of tissue distribution, ubiquitous in most somatic tissues from syncytial embryo through to embryo stage 15. Expression becomes restricted predominantly to the CNS at stages 16 and 17.

It is found in the cytoplasm. Functionally, essential for late larval/early pupal development. In Drosophila melanogaster (Fruit fly), this protein is RING finger protein unkempt (unk).